A 436-amino-acid chain; its full sequence is Hydrolyase ccsE (436 aa).

Residue S249 is the Nucleophile of the active site.

It belongs to the AB hydrolase superfamily. FUS2 hydrolase family. Homodimer.

It participates in mycotoxin biosynthesis. Hydrolyase; part of the gene cluster that mediates the biosynthesis of a family of the mycotoxins cytochalasins E and K. The hybrid PKS-NRPS synthetase ccsA and the enoyl reductase ccsC are responsible for fusion of phenylalanine with an octaketide backbone and subsequent release of the stable tetramic acid precursor. The polyketide synthase module (PKS) of the PKS-NRPS ccsA is responsible for the synthesis of the octaketide backbone. The downstream nonribosomal peptide synthetase (NRPS) amidates the carboxyl end of the octaketide with a phenylalanine. A reductase-like domain (R) at the C-terminus catalyzes the reductive release of the polyketide-amino acid intermediate. Because ccsA lacks a designated enoylreductase (ER) domain, the required activity is provided the enoyl reductase ccsC. Upon formation of the 11-membered carbocycle-fused perhydroisoindolone intermediate, a number of oxidative steps are required to afford the final cytochalasin E and K, including two hydroxylations at C17 and C18, one alcohol oxidation at C17, one epoxidation at C6 and C7 and two Baeyer-Villiger oxidations. The oxidative modification at C17, C18 and the C6-C7 epoxidation are likely to be catalyzed by the two cytochrome P450 oxygenases ccsD and ccsG. CcsD may be responsible for the epoxidation of the C6-C7 double bond. CcsG may be responsible for the successive oxidative modifications at C17 and C18. The double Baeyer-Villiger oxidations of ketocytochalasin to precytochalasin and cytochalasin Z(16) are among the final steps leading to cytochalasin E and K and are catalyzed by ccsB. The first oxygen insertion step follows that of the classic BVMO mechanism, generating the ester precytochalasin. Release of precytochalasin into an aqueous environment can generate the shunt product iso-precytochalasin through spontaneous isomerization. Alternatively, precytochalasin can undergo further oxidation by ccsB to yield the in-line carbonate-containing cytochalasin Z(16). Cytochalasin Z(16) is a precursor to cytochalasin E and cytochalasin K, whereas iso-precytochalasin is a precursor to cytochalasin Z(17) and rosellichalasin. The hydrolyase ccsE may catalyze hydrolysis of epoxide bond in cytochalasin E to afford cytochalasin K. The function of ccsF has not been assigned but it may play a role in post-PKS-NRPS biosynthetic step, resistance or transport of cytochalasins and related PKS-NRPS products. The polypeptide is Hydrolyase ccsE (Aspergillus clavatus (strain ATCC 1007 / CBS 513.65 / DSM 816 / NCTC 3887 / NRRL 1 / QM 1276 / 107)).